The sequence spans 369 residues: Anthranilate phosphoribosyltransferase (369 aa).

Residues glycine 85, 88-89, threonine 93, 95-98, 113-121, and serine 125 contribute to the 5-phospho-alpha-D-ribose 1-diphosphate site; these read GD, NLST, and KHGNRAASS. Residue glycine 85 coordinates anthranilate. Serine 97 is a binding site for Mg(2+). Asparagine 116 contacts anthranilate. Arginine 171 contacts anthranilate. Aspartate 229 and glutamate 230 together coordinate Mg(2+).

Belongs to the anthranilate phosphoribosyltransferase family. As to quaternary structure, homodimer. It depends on Mg(2+) as a cofactor.

The catalysed reaction is N-(5-phospho-beta-D-ribosyl)anthranilate + diphosphate = 5-phospho-alpha-D-ribose 1-diphosphate + anthranilate. Its pathway is amino-acid biosynthesis; L-tryptophan biosynthesis; L-tryptophan from chorismate: step 2/5. Its function is as follows. Catalyzes the transfer of the phosphoribosyl group of 5-phosphorylribose-1-pyrophosphate (PRPP) to anthranilate to yield N-(5'-phosphoribosyl)-anthranilate (PRA). This Frankia alni (strain DSM 45986 / CECT 9034 / ACN14a) protein is Anthranilate phosphoribosyltransferase.